The chain runs to 296 residues: Malate--CoA ligase subunit alpha (296 aa).

CoA-binding positions include 17–20, Lys43, and 96–98; these read TGDK and ITD. His251 acts as the Tele-phosphohistidine intermediate in catalysis.

The protein belongs to the succinate/malate CoA ligase alpha subunit family. Heterotetramer of two alpha and two beta subunits.

The enzyme catalyses (S)-malate + ATP + CoA = (S)-malyl-CoA + ADP + phosphate. The protein operates within one-carbon metabolism; formaldehyde assimilation via serine pathway. This is Malate--CoA ligase subunit alpha (mtkB) from Methylorubrum extorquens (strain ATCC 14718 / DSM 1338 / JCM 2805 / NCIMB 9133 / AM1) (Methylobacterium extorquens).